Here is a 3013-residue protein sequence, read N- to C-terminus: DmX-like protein 1 (3013 aa).

WD repeat units lie at residues Phe108 to Glu145, Lys164 to Val204, and Ala227 to Phe275. A phosphoserine mark is found at Ser322, Ser420, Ser423, and Ser434. Positions Pro418 to Val442 are disordered. Residues Asp474–Pro514 form a WD 4 repeat. Ser572 carries the phosphoserine modification. WD repeat units lie at residues Ala578–Phe619 and Lys842–Ser893. Phosphoserine is present on residues Ser916 and Ser922. WD repeat units follow at residues His970–Ala1008, Glu1145–Lys1193, and Gly1208–Ile1248. Residues Ser1829, Ser1896, Ser1903, and Ser1965 each carry the phosphoserine modification. Disordered regions lie at residues Gly2364–Val2406 and Gln2431–Leu2462. Residues Ser2385 to Ser2398 show a composition bias toward low complexity. Acidic residues predominate over residues Asp2437–Ala2455. WD repeat units follow at residues Lys2728 to Arg2769, Gly2771 to Thr2810, Cys2822 to Leu2864, Cys2870 to Leu2909, Ser2912 to Thr2951, and Asn2964 to Asn3002.

In Mus musculus (Mouse), this protein is DmX-like protein 1 (Dmxl1).